We begin with the raw amino-acid sequence, 259 residues long: Pimeloyl-[acyl-carrier protein] methyl ester esterase (259 aa).

The 229-residue stretch at 16–244 (LVFIHGWGLN…ASHAPFLSHP (229 aa)) folds into the AB hydrolase-1 domain. Residues tryptophan 22, 82–83 (SL), and 143–147 (FFNIQ) each bind substrate. The Nucleophile role is filled by serine 82. Catalysis depends on residues aspartate 207 and histidine 237. Position 237 (histidine 237) interacts with substrate.

The protein belongs to the AB hydrolase superfamily. Carboxylesterase BioH family. As to quaternary structure, monomer.

The protein localises to the cytoplasm. The catalysed reaction is 6-carboxyhexanoyl-[ACP] methyl ester + H2O = 6-carboxyhexanoyl-[ACP] + methanol + H(+). It participates in cofactor biosynthesis; biotin biosynthesis. Functionally, the physiological role of BioH is to remove the methyl group introduced by BioC when the pimeloyl moiety is complete. It allows to synthesize pimeloyl-ACP via the fatty acid synthetic pathway through the hydrolysis of the ester bonds of pimeloyl-ACP esters. The protein is Pimeloyl-[acyl-carrier protein] methyl ester esterase of Wigglesworthia glossinidia brevipalpis.